Consider the following 154-residue polypeptide: Large ribosomal subunit protein bL17 (154 aa).

A disordered region spans residues 127–154; it reads TAAKQDRAKRVKGSKKAETEKEGGESAE. Basic and acidic residues predominate over residues 141 to 154; sequence KKAETEKEGGESAE.

The protein belongs to the bacterial ribosomal protein bL17 family. In terms of assembly, part of the 50S ribosomal subunit. Contacts protein L32.

The chain is Large ribosomal subunit protein bL17 from Chlorobaculum parvum (strain DSM 263 / NCIMB 8327) (Chlorobium vibrioforme subsp. thiosulfatophilum).